The primary structure comprises 279 residues: Ribosomal RNA large subunit methyltransferase E (279 aa).

Basic and acidic residues predominate over residues 1–10 (MSDDDQKPED). The disordered stretch occupies residues 1–66 (MSDDDQKPED…MKKGGDARAA (66 aa)). The S-adenosyl-L-methionine site is built by Gly136, Trp138, Asp154, Asp170, and Asp194. Lys234 functions as the Proton acceptor in the catalytic mechanism.

This sequence belongs to the class I-like SAM-binding methyltransferase superfamily. RNA methyltransferase RlmE family.

The protein resides in the cytoplasm. It carries out the reaction uridine(2552) in 23S rRNA + S-adenosyl-L-methionine = 2'-O-methyluridine(2552) in 23S rRNA + S-adenosyl-L-homocysteine + H(+). In terms of biological role, specifically methylates the uridine in position 2552 of 23S rRNA at the 2'-O position of the ribose in the fully assembled 50S ribosomal subunit. This is Ribosomal RNA large subunit methyltransferase E from Maricaulis maris (strain MCS10) (Caulobacter maris).